The following is a 243-amino-acid chain: uncharacterized protein (243 aa).

[4Fe-4S] cluster is bound by residues C120 and C157.

As to quaternary structure, homodimer. It depends on [4Fe-4S] cluster as a cofactor.

This is an uncharacterized protein from Methanocaldococcus jannaschii (strain ATCC 43067 / DSM 2661 / JAL-1 / JCM 10045 / NBRC 100440) (Methanococcus jannaschii).